A 237-amino-acid chain; its full sequence is Ribonuclease PH (237 aa).

Phosphate-binding positions include arginine 86 and 124 to 126 (GTR).

The protein belongs to the RNase PH family. Homohexameric ring arranged as a trimer of dimers.

The enzyme catalyses tRNA(n+1) + phosphate = tRNA(n) + a ribonucleoside 5'-diphosphate. In terms of biological role, phosphorolytic 3'-5' exoribonuclease that plays an important role in tRNA 3'-end maturation. Removes nucleotide residues following the 3'-CCA terminus of tRNAs; can also add nucleotides to the ends of RNA molecules by using nucleoside diphosphates as substrates, but this may not be physiologically important. Probably plays a role in initiation of 16S rRNA degradation (leading to ribosome degradation) during starvation. This chain is Ribonuclease PH, found in Shewanella woodyi (strain ATCC 51908 / MS32).